Here is a 473-residue protein sequence, read N- to C-terminus: ATP synthase subunit beta (473 aa).

158–165 (GGAGVGKT) is a binding site for ATP.

The protein belongs to the ATPase alpha/beta chains family. As to quaternary structure, F-type ATPases have 2 components, CF(1) - the catalytic core - and CF(0) - the membrane proton channel. CF(1) has five subunits: alpha(3), beta(3), gamma(1), delta(1), epsilon(1). CF(0) has three main subunits: a(1), b(2) and c(9-12). The alpha and beta chains form an alternating ring which encloses part of the gamma chain. CF(1) is attached to CF(0) by a central stalk formed by the gamma and epsilon chains, while a peripheral stalk is formed by the delta and b chains.

The protein resides in the cell membrane. It carries out the reaction ATP + H2O + 4 H(+)(in) = ADP + phosphate + 5 H(+)(out). In terms of biological role, produces ATP from ADP in the presence of a proton gradient across the membrane. The catalytic sites are hosted primarily by the beta subunits. The sequence is that of ATP synthase subunit beta from Bacillus velezensis (strain DSM 23117 / BGSC 10A6 / LMG 26770 / FZB42) (Bacillus amyloliquefaciens subsp. plantarum).